A 482-amino-acid chain; its full sequence is MAHLLSTSCSMKVSPSEKLSSKCWNIGSTKYPMSFTQQTSKSAFKSLVHQRNNTQKLTVVRATTVPLNQETKAESGTSSFENNGNTSGRKRVMVIGGDGYCGWATALHLSKKNYDVCIVDNLVRRLFDHQLGLDSLTPIASIQNRIRRWQGLTGKTIDLHVGDICDFEFLAETFKSFEPDTVVHFGEQRSAPYSMIDRSRAVYTQQNNVIGTINVLFAIKEFSEECHLVKLGTMGEYGTPNIDIEEGFITITHNGRTDTLPYPKQASSFYHLSKVHDSHNIAFTCKAWGIRATDLNQGVVYGVMTEETAMHEELCNRFDYDAVFGTALNRFCVQAAVGHPLTVYGKGGQTRGYLDIRDTVQCVELAIANPAKLGEFRVFNQFTEQYSVRDLAALVTKAGEKLGLNVETISVPNPRVEAEEHYYNAKHTKLAELGLKPHLLSDSLLDSVLNFAVQYKDRVDTKQIMPSVSWKKIGVKPQTLRA.

The transit peptide at 1-61 (MAHLLSTSCS…NNTQKLTVVR (61 aa)) directs the protein to the chloroplast. NAD(+)-binding positions include 100 to 101 (YC), 120 to 124 (DNLVR), 163 to 164 (DI), R189, and N207. R189 serves as a coordination point for substrate. Substrate is bound by residues T233 and Y270. T233 is a catalytic residue. 2 residues coordinate NAD(+): Y270 and K274. The active-site Proton acceptor is the Y270. K274 is an active-site residue. Q297 is a binding site for substrate. V300 provides a ligand contact to NAD(+). Substrate is bound by residues 327–330 (ALNR), 342–344 (TVY), and 415–417 (RVE).

It belongs to the NAD(P)-dependent epimerase/dehydratase family. As to quaternary structure, homodimer. Interacts with FdGOGAT (via FMN-binding domain). NAD(+) is required as a cofactor. In terms of processing, the N-terminus is blocked.

The protein localises to the plastid. The protein resides in the chloroplast stroma. It carries out the reaction sulfite + UDP-alpha-D-glucose + H(+) = UDP-alpha-D-6-sulfoquinovose + H2O. Involved in the biosynthesis of sulfolipids found in thylakoid membranes. Converts UDP-glucose and sulfite to the sulfolipid head group precursor UDP-sulfoquinovose. The sulfite is delivered to the reaction center by the FMN-binding domain of FdGOGAT. The sequence is that of UDP-sulfoquinovose synthase, chloroplastic (SQD1) from Spinacia oleracea (Spinach).